A 416-amino-acid polypeptide reads, in one-letter code: D-amino acid dehydrogenase (416 aa).

3-17 is a binding site for FAD; sequence ITILGSGVIGVTTAY.

Belongs to the DadA oxidoreductase family. FAD is required as a cofactor.

It carries out the reaction a D-alpha-amino acid + A + H2O = a 2-oxocarboxylate + AH2 + NH4(+). In terms of biological role, oxidative deamination of D-amino acids. This chain is D-amino acid dehydrogenase, found in Brucella suis biovar 1 (strain 1330).